We begin with the raw amino-acid sequence, 230 residues long: Phosducin-like protein 1 (230 aa).

Met1 bears the N-acetylmethionine mark. The Phosducin domain maps to 16–166 (AEKDKHTTVD…VVGYKNGLEK (151 aa)). Positions 25 to 79 (DSDDKSSGEENLDELLNELDRELDEDHEFLSAYRSERLQQISDHLKQVKKNVEDD) form a coiled coil. The thioredoxin fold stretch occupies residues 81 to 230 (YGRLQCIDNE…RSESDSDLDI (150 aa)).

Belongs to the phosducin family. In terms of assembly, interacts with the G protein beta-gamma subunit complex (STE4-STE18 complex).

It is found in the cytoplasm. Not essential for growth. Inhibits early G-protein signaling events following pheromone stimulation. May help create heterodimerizable beta-tubulin by facilitating the efficient transfer of nascent beta-tubulin polypeptides to the folding apparatus. This Saccharomyces cerevisiae (strain ATCC 204508 / S288c) (Baker's yeast) protein is Phosducin-like protein 1 (PLP1).